Here is a 288-residue protein sequence, read N- to C-terminus: ATP synthase subunit a (288 aa).

Helical transmembrane passes span 47–67 (LDSM…FWLV), 104–124 (LIAP…LMDL), 157–177 (DPNI…YYSI), 199–219 (PIAK…TLIA), 237–257 (LIFV…SVPW), and 258–278 (AIFH…LTIV).

This sequence belongs to the ATPase A chain family. F-type ATPases have 2 components, CF(1) - the catalytic core - and CF(0) - the membrane proton channel. CF(1) has five subunits: alpha(3), beta(3), gamma(1), delta(1), epsilon(1). CF(0) has three main subunits: a(1), b(2) and c(9-12). The alpha and beta chains form an alternating ring which encloses part of the gamma chain. CF(1) is attached to CF(0) by a central stalk formed by the gamma and epsilon chains, while a peripheral stalk is formed by the delta and b chains.

It is found in the cell inner membrane. Its function is as follows. Key component of the proton channel; it plays a direct role in the translocation of protons across the membrane. This Psychrobacter sp. (strain PRwf-1) protein is ATP synthase subunit a.